The primary structure comprises 112 residues: Large ribosomal subunit protein eL30x (112 aa).

It belongs to the eukaryotic ribosomal protein eL30 family.

This Arabidopsis thaliana (Mouse-ear cress) protein is Large ribosomal subunit protein eL30x (RPL30C).